The primary structure comprises 1755 residues: Transposon Ty1-GR3 Gag-Pol polyprotein (1755 aa).

3 stretches are compositionally biased toward polar residues: residues 1–10 (MESQQLSNYP), 48–60 (TKAN…TPAS), and 127–152 (QSQF…GNTF). Disordered stretches follow at residues 1 to 93 (MESQ…MMTQ), 126 to 173 (PQSQ…RPPP), and 352 to 421 (GSRN…SKST). Residues 153–165 (TDSSSADSDMTST) show a composition bias toward low complexity. The interval 299–401 (NNGIHINNKV…NSKSKTARAH (103 aa)) is RNA-binding. Residues 402 to 418 (NVSTSNNSPSTDNDSIS) show a composition bias toward low complexity. Ser-416 is subject to Phosphoserine. Asp-461 (for protease activity; shared with dimeric partner) is an active-site residue. The interval 583 to 640 (NVHTSESTRKYPYPFIHRMLAHANAQTIRYSLKNNTITYFNESDVDWSSAIDYQCPDC) is integrase-type zinc finger-like. Residues 660–835 (NSYEPFQYLH…AGLDISTLLP (176 aa)) enclose the Integrase catalytic domain. Mg(2+) is bound by residues Asp-671 and Asp-736. The segment at 956 to 1172 (SKAVSPTDST…LGGIGDSNAY (217 aa)) is disordered. Over residues 960–969 (SPTDSTPPST) the composition is skewed to low complexity. Composition is skewed to polar residues over residues 1005–1015 (STPQISNIEST) and 1031–1043 (MSQS…SYAS). Basic and acidic residues predominate over residues 1044-1053 (KSKDFRHSDS). 2 stretches are compositionally biased toward polar residues: residues 1054 to 1082 (YSDN…QTSE) and 1095 to 1106 (SIDTSSSESNSL). The short motif at 1178-1212 (KKRSLEDNETEIKVSRDTWNTKNMRSLEPPRSKKR) is the Bipartite nuclear localization signal element. Residues 1338 to 1476 (NNYYITQLDI…DILGLEIKYQ (139 aa)) form the Reverse transcriptase Ty1/copia-type domain. 6 residues coordinate Mg(2+): Asp-1346, Asp-1427, Asp-1428, Asp-1610, Glu-1652, and Asp-1685. In terms of domain architecture, RNase H Ty1/copia-type spans 1610-1752 (DASYGNQPYY…IKTFKLLTNK (143 aa)).

The capsid protein forms a homotrimer, from which the VLPs are assembled. The protease is a homodimer, whose active site consists of two apposed aspartic acid residues. In terms of processing, initially, virus-like particles (VLPs) are composed of the structural unprocessed proteins Gag and Gag-Pol, and also contain the host initiator methionine tRNA (tRNA(i)-Met) which serves as a primer for minus-strand DNA synthesis, and a dimer of genomic Ty RNA. Processing of the polyproteins occurs within the particle and proceeds by an ordered pathway, called maturation. First, the protease (PR) is released by autocatalytic cleavage of the Gag-Pol polyprotein yielding capsid protein p45 and a Pol-p154 precursor protein. This cleavage is a prerequisite for subsequent processing of Pol-p154 at the remaining sites to release the mature structural and catalytic proteins. Maturation takes place prior to the RT reaction and is required to produce transposition-competent VLPs.

It localises to the cytoplasm. It is found in the nucleus. The enzyme catalyses DNA(n) + a 2'-deoxyribonucleoside 5'-triphosphate = DNA(n+1) + diphosphate. It carries out the reaction Endonucleolytic cleavage to 5'-phosphomonoester.. Capsid protein (CA) is the structural component of the virus-like particle (VLP), forming the shell that encapsulates the retrotransposons dimeric RNA genome. The particles are assembled from trimer-clustered units and there are holes in the capsid shells that allow for the diffusion of macromolecules. CA also has nucleocapsid-like chaperone activity, promoting primer tRNA(i)-Met annealing to the multipartite primer-binding site (PBS), dimerization of Ty1 RNA and initiation of reverse transcription. Its function is as follows. The aspartyl protease (PR) mediates the proteolytic cleavages of the Gag and Gag-Pol polyproteins after assembly of the VLP. In terms of biological role, reverse transcriptase/ribonuclease H (RT) is a multifunctional enzyme that catalyzes the conversion of the retro-elements RNA genome into dsDNA within the VLP. The enzyme displays a DNA polymerase activity that can copy either DNA or RNA templates, and a ribonuclease H (RNase H) activity that cleaves the RNA strand of RNA-DNA heteroduplexes during plus-strand synthesis and hydrolyzes RNA primers. The conversion leads to a linear dsDNA copy of the retrotransposon that includes long terminal repeats (LTRs) at both ends. Functionally, integrase (IN) targets the VLP to the nucleus, where a subparticle preintegration complex (PIC) containing at least integrase and the newly synthesized dsDNA copy of the retrotransposon must transit the nuclear membrane. Once in the nucleus, integrase performs the integration of the dsDNA into the host genome. This is Transposon Ty1-GR3 Gag-Pol polyprotein (TY1B-GR3) from Saccharomyces cerevisiae (strain ATCC 204508 / S288c) (Baker's yeast).